The chain runs to 328 residues: GTP 3',8-cyclase (328 aa).

The Radical SAM core domain maps to 1 to 229 (MNQVDYLRIS…DAQVRGSGPA (229 aa)). R8 contacts GTP. The [4Fe-4S] cluster site is built by C15 and C19. Y21 serves as a coordination point for S-adenosyl-L-methionine. C22 contributes to the [4Fe-4S] cluster binding site. R60 is a binding site for GTP. G64 lines the S-adenosyl-L-methionine pocket. T91 is a GTP binding site. S115 lines the S-adenosyl-L-methionine pocket. K155 serves as a coordination point for GTP. Residue M189 participates in S-adenosyl-L-methionine binding. Residues C252 and C255 each contribute to the [4Fe-4S] cluster site. Residue 257 to 259 (RMR) coordinates GTP. C269 contacts [4Fe-4S] cluster.

It belongs to the radical SAM superfamily. MoaA family. Monomer and homodimer. Requires [4Fe-4S] cluster as cofactor.

The enzyme catalyses GTP + AH2 + S-adenosyl-L-methionine = (8S)-3',8-cyclo-7,8-dihydroguanosine 5'-triphosphate + 5'-deoxyadenosine + L-methionine + A + H(+). The protein operates within cofactor biosynthesis; molybdopterin biosynthesis. Catalyzes the cyclization of GTP to (8S)-3',8-cyclo-7,8-dihydroguanosine 5'-triphosphate. This Trichormus variabilis (strain ATCC 29413 / PCC 7937) (Anabaena variabilis) protein is GTP 3',8-cyclase.